We begin with the raw amino-acid sequence, 467 residues long: UPF0236 protein TTE0610/TTE0881/TTE1053/TTE2432 (467 aa).

This sequence belongs to the UPF0236 family.

This chain is UPF0236 protein TTE0610/TTE0881/TTE1053/TTE2432, found in Caldanaerobacter subterraneus subsp. tengcongensis (strain DSM 15242 / JCM 11007 / NBRC 100824 / MB4) (Thermoanaerobacter tengcongensis).